The chain runs to 23 residues: VDFASESXNKRENQQIVDKHNAL.

The interval 1 to 23 is disordered; the sequence is VDFASESXNKRENQQIVDKHNAL. Positions 8–23 are enriched in basic and acidic residues; the sequence is XNKRENQQIVDKHNAL.

This sequence belongs to the CRISP family. In terms of processing, contains 8 disulfide bonds. In terms of tissue distribution, expressed by the venom gland.

Its subcellular location is the secreted. The protein is Cysteine-rich venom protein 24 of Naja kaouthia (Monocled cobra).